We begin with the raw amino-acid sequence, 91 residues long: Small ribosomal subunit protein uS19 (91 aa).

Belongs to the universal ribosomal protein uS19 family.

In terms of biological role, protein S19 forms a complex with S13 that binds strongly to the 16S ribosomal RNA. This Bordetella pertussis (strain Tohama I / ATCC BAA-589 / NCTC 13251) protein is Small ribosomal subunit protein uS19.